The following is a 203-amino-acid chain: Glycerol-3-phosphate acyltransferase (203 aa).

Transmembrane regions (helical) follow at residues 10–30 (LLLG…FGIM), 60–80 (LAAF…VFLA), 88–108 (AAQL…FLGF), 118–138 (LGTL…IWAI), and 162–182 (FTLG…LIFL).

It belongs to the PlsY family. In terms of assembly, probably interacts with PlsX.

It is found in the cell inner membrane. The enzyme catalyses an acyl phosphate + sn-glycerol 3-phosphate = a 1-acyl-sn-glycero-3-phosphate + phosphate. The protein operates within lipid metabolism; phospholipid metabolism. In terms of biological role, catalyzes the transfer of an acyl group from acyl-phosphate (acyl-PO(4)) to glycerol-3-phosphate (G3P) to form lysophosphatidic acid (LPA). This enzyme utilizes acyl-phosphate as fatty acyl donor, but not acyl-CoA or acyl-ACP. The polypeptide is Glycerol-3-phosphate acyltransferase (Jannaschia sp. (strain CCS1)).